The chain runs to 242 residues: NAD-dependent protein deacetylase (242 aa).

Residues 1–242 enclose the Deacetylase sirtuin-type domain; that stretch reads MQQFEEVRTI…EFVEGLSSIK (242 aa). Alanine 23, threonine 27, phenylalanine 34, arginine 35, glutamine 102, isoleucine 104, aspartate 105, and histidine 120 together coordinate NAD(+). Phenylalanine 34 is a binding site for nicotinamide. 2 residues coordinate nicotinamide: isoleucine 104 and aspartate 105. Histidine 120 serves as the catalytic Proton acceptor. Residues cysteine 128, cysteine 131, cysteine 148, and cysteine 151 each contribute to the Zn(2+) site. NAD(+) is bound by residues threonine 187, serine 188, asparagine 213, and isoleucine 231.

The protein belongs to the sirtuin family. Class U subfamily. Zn(2+) serves as cofactor.

It localises to the cytoplasm. It catalyses the reaction N(6)-acetyl-L-lysyl-[protein] + NAD(+) + H2O = 2''-O-acetyl-ADP-D-ribose + nicotinamide + L-lysyl-[protein]. Functionally, NAD-dependent protein deacetylase which modulates the activities of several enzymes which are inactive in their acetylated form. This chain is NAD-dependent protein deacetylase, found in Bacillus anthracis.